We begin with the raw amino-acid sequence, 169 residues long: Probable calcium-binding protein CML13 (169 aa).

The tract at residues 1–26 (MSTVKGQTRRERPRGARPHGLTKQKR) is disordered. The span at 15-24 (GARPHGLTKQ) shows a compositional bias: basic residues. EF-hand domains are found at residues 24–59 (QKRQEIKEAFDLFDTDNSGTIDAKELNVAMRALGFE), 60–95 (MTEEQINQMIADVDKDGSGSIDYEEFEHMMTAKIGE), 97–132 (DSKEELTKAFSIIDQDKNGKISDVDIQRIAKELGEN), and 133–168 (FTYQEIQEMVQEADRNGDGEIDFDEFIRMMRRTGYG). Ca(2+) contacts are provided by Asp37, Asp39, Ser41, Thr43, Glu48, Asp73, Asp75, Ser77, Ser79, Glu84, Asp110, Asp112, Asn114, Lys116, Asp121, Asp146, Asn148, Asp150, Glu152, and Glu157.

Its function is as follows. Potential calcium sensor. This Oryza sativa subsp. japonica (Rice) protein is Probable calcium-binding protein CML13 (CML13).